We begin with the raw amino-acid sequence, 146 residues long: Stress-responsive DNAJB4-interacting membrane protein 1 (146 aa).

An N-terminal signal peptide occupies residues 1–26 (MWPAPCSVGRLLIFFMCSSSGYVVQG). Residues 27-66 (CGPSPGARTTLGSPLSLWSIKTPSHIFCTRRAINLGFPSP) lie on the Extracellular side of the membrane. A helical transmembrane segment spans residues 67 to 87 (PLVQLIFWSLNAGLDLYLCLI). Topologically, residues 88 to 94 (SSCGFSQ) are cytoplasmic. The chain crosses the membrane as a helical span at residues 95 to 115 (VFWPVEAFCSFSLSFFALALS). Over 116–146 (HKFVICRLDQHIFSGFTKSLKNLPPCHRTDI) the chain is Extracellular.

As to quaternary structure, homodimer. Interacts with DNAJB4. As to expression, expressed in brain with higher detection in neurons than astrocytes. Decreased expression in Alzheimer brains. Detected at protein level in brain and cervix.

It localises to the membrane. Its function is as follows. Promotes neuronal cells survival to stress conditions. This chain is Stress-responsive DNAJB4-interacting membrane protein 1 (SDIM1), found in Homo sapiens (Human).